Consider the following 340-residue polypeptide: Dof zinc finger protein DOF2.2 (340 aa).

The tract at residues 12–33 is disordered; it reads PPINWPQSANPNNHPHHHQLQE. A Dof-type zinc finger spans residues 94 to 148; sequence LKCPRCDSANTKFCYFNNYNLTQPRHFCKACRRYWTRGGALRNVPVGGGCRRNKK. Cys96, Cys99, Cys121, and Cys124 together coordinate Zn(2+). Disordered stretches follow at residues 138-180 and 301-340; these read PVGG…TSNV and GNIS…QHLM. Low complexity predominate over residues 151-165; it reads SGNSKSSSSSQNKQS. Polar residues-rich tracts occupy residues 166 to 180 and 309 to 331; these read TSMV…TSNV and GLTS…GSSS.

Its subcellular location is the nucleus. In terms of biological role, transcription factor that binds specifically to a 5'-AA[AG]G-3' consensus core sequence. This Arabidopsis thaliana (Mouse-ear cress) protein is Dof zinc finger protein DOF2.2 (DOF2.2).